A 142-amino-acid chain; its full sequence is ATP synthase epsilon chain (142 aa).

It belongs to the ATPase epsilon chain family. In terms of assembly, F-type ATPases have 2 components, CF(1) - the catalytic core - and CF(0) - the membrane proton channel. CF(1) has five subunits: alpha(3), beta(3), gamma(1), delta(1), epsilon(1). CF(0) has three main subunits: a, b and c.

Its subcellular location is the cell inner membrane. In terms of biological role, produces ATP from ADP in the presence of a proton gradient across the membrane. The sequence is that of ATP synthase epsilon chain from Coxiella burnetii (strain CbuK_Q154) (Coxiella burnetii (strain Q154)).